We begin with the raw amino-acid sequence, 220 residues long: MAKPKSPSRRELLTNGVKAAGVTCLAGLALTAYVESASKAEAKALRPPGALPEDDFLAACVRCGLCVRACPYDTLRLAEMGEEAPLGTPFFVARETPCFMCTDVPCAKACPTGALDRDIPNIRKADMGVAVLVGHESCLNYKGITCSICHRVCPIRDEAITLEVQTIKGRRMVIPTVHSDKCTGCGTCEKHCVLGQAAIRVLPRELGLGGRGRNPAGRAV.

2 consecutive 4Fe-4S ferredoxin-type domains span residues 50 to 80 (ALPE…LAEM) and 88 to 120 (TPFF…RDIP). Residues Cys-60, Cys-63, Cys-66, Cys-70, Cys-98, Cys-101, Cys-106, Cys-110, Cys-138, Cys-146, Cys-149, Cys-153, Cys-182, Cys-185, Cys-188, and Cys-192 each contribute to the [4Fe-4S] cluster site. The 32-residue stretch at 173–204 (VIPTVHSDKCTGCGTCEKHCVLGQAAIRVLPR) folds into the 4Fe-4S ferredoxin-type 3 domain.

The protein operates within one-carbon metabolism; methylamine degradation. In terms of biological role, involved in electron transfer. This chain is Methylamine utilization ferredoxin-type protein MauM (mauM), found in Methylorubrum extorquens (strain ATCC 14718 / DSM 1338 / JCM 2805 / NCIMB 9133 / AM1) (Methylobacterium extorquens).